Consider the following 485-residue polypeptide: Cytoplasmic tRNA 2-thiolation protein 2 (485 aa).

This sequence belongs to the CTU2/NCS2 family.

Its subcellular location is the cytoplasm. It functions in the pathway tRNA modification; 5-methoxycarbonylmethyl-2-thiouridine-tRNA biosynthesis. Its function is as follows. Plays a central role in 2-thiolation of mcm(5)S(2)U at tRNA wobble positions of tRNA(Lys), tRNA(Glu) and tRNA(Gln). May act by forming a heterodimer with NCS6 that ligates sulfur from thiocarboxylated URM1 onto the uridine of tRNAs at wobble position. Prior mcm(5) tRNA modification by the elongator complex is required for 2-thiolation. May also be involved in protein urmylation. The sequence is that of Cytoplasmic tRNA 2-thiolation protein 2 from Vanderwaltozyma polyspora (strain ATCC 22028 / DSM 70294 / BCRC 21397 / CBS 2163 / NBRC 10782 / NRRL Y-8283 / UCD 57-17) (Kluyveromyces polysporus).